The chain runs to 326 residues: tRNA uridine(34) hydroxylase (326 aa).

A Rhodanese domain is found at 123–217 (SDPDVILVDT…YLEEVKQEES (95 aa)). Catalysis depends on C177, which acts as the Cysteine persulfide intermediate.

The protein belongs to the TrhO family.

It carries out the reaction uridine(34) in tRNA + AH2 + O2 = 5-hydroxyuridine(34) in tRNA + A + H2O. Its function is as follows. Catalyzes oxygen-dependent 5-hydroxyuridine (ho5U) modification at position 34 in tRNAs. The chain is tRNA uridine(34) hydroxylase from Shewanella denitrificans (strain OS217 / ATCC BAA-1090 / DSM 15013).